The chain runs to 76 residues: Waprin-Rha1 (76 aa).

An N-terminal signal peptide occupies residues 1 to 24 (MQARVFLLLLGVILLGMMGPMVSA). The 51-residue stretch at 25–75 (QDGKAGSCPDVNQPIPPLGVCKTTCATDSNCPDIQKCCKNGCGHMSCTRPS) folds into the WAP domain. Cystine bridges form between Cys-32–Cys-62, Cys-45–Cys-66, Cys-49–Cys-61, and Cys-55–Cys-71.

Belongs to the venom waprin family. As to expression, expressed by the venom gland.

It localises to the secreted. Functionally, damages membranes of susceptible bacteria. Has no hemolytic activity. Not toxic to mice. Does not inhibit the proteinases elastase and cathepsin G. The chain is Waprin-Rha1 from Rhabdophis tigrinus tigrinus (Tiger keelback snake).